Consider the following 525-residue polypeptide: GMP synthase [glutamine-hydrolyzing] (525 aa).

The Glutamine amidotransferase type-1 domain maps to 8–207; the sequence is KILILDFGSQ…ALDICGCAAN (200 aa). The Nucleophile role is filled by Cys-85. Residues His-181 and Glu-183 contribute to the active site. Residues 208–400 enclose the GMPS ATP-PPase domain; that stretch reads WKPSSIIEDA…LGLPYNMLYR (193 aa). Position 235–241 (235–241) interacts with ATP; the sequence is SGGVDSS.

As to quaternary structure, homodimer.

The catalysed reaction is XMP + L-glutamine + ATP + H2O = GMP + L-glutamate + AMP + diphosphate + 2 H(+). Its pathway is purine metabolism; GMP biosynthesis; GMP from XMP (L-Gln route): step 1/1. Its function is as follows. Catalyzes the synthesis of GMP from XMP. This is GMP synthase [glutamine-hydrolyzing] from Shewanella sp. (strain MR-7).